A 302-amino-acid polypeptide reads, in one-letter code: MDGVLLLNKPKGMTSHDCVAKVRRLLGIKKVGHTGTLDPNVSGVLPICLGKATRIAEFLTGATKTYEGEVTLGAATSTEDADGDIIAVQTVDRTIARAEIEAVFRSLTGDIEQTPPMYSAVKVNGKKLYEYARAGIEVERPTRRVTIYELELLDEREQFVGETVSFRFRVMCSKGTYVRTLAVTIGERLGYPAHMSDLIRTASGPFQLADCVTLEEVERRAADGTVDALLIPIEQALFHLPKYEISDKVAEKVKNGALLRLPAFLQELDGPVLLVTPEREAMALYVKHPARPGVMKPLKVFR.

Aspartate 38 functions as the Nucleophile in the catalytic mechanism.

This sequence belongs to the pseudouridine synthase TruB family. Type 1 subfamily.

It carries out the reaction uridine(55) in tRNA = pseudouridine(55) in tRNA. Responsible for synthesis of pseudouridine from uracil-55 in the psi GC loop of transfer RNAs. The chain is tRNA pseudouridine synthase B from Geobacillus thermodenitrificans (strain NG80-2).